The following is a 171-amino-acid chain: Co-chaperone protein HscB (171 aa).

Positions 2–74 (DYFTLFGLPA…LTRAEYLLSL (73 aa)) constitute a J domain.

Belongs to the HscB family. As to quaternary structure, interacts with HscA and stimulates its ATPase activity. Interacts with IscU.

Its function is as follows. Co-chaperone involved in the maturation of iron-sulfur cluster-containing proteins. Seems to help targeting proteins to be folded toward HscA. The sequence is that of Co-chaperone protein HscB from Salmonella typhimurium (strain LT2 / SGSC1412 / ATCC 700720).